The sequence spans 144 residues: Hemoglobin subunit alpha-1 (144 aa).

Position 1 is an N-acetylserine (S1). Residues S1–R144 enclose the Globin domain. H61 contributes to the O2 binding site. H90 lines the heme b pocket.

This sequence belongs to the globin family. Heterotetramer of two alpha chains and two beta chains. In terms of tissue distribution, red blood cells.

Functionally, involved in oxygen transport from gills to the various peripheral tissues. The polypeptide is Hemoglobin subunit alpha-1 (hba1) (Oncorhynchus mykiss (Rainbow trout)).